The chain runs to 253 residues: MRKTFLAGNWKMHYTSTEASIVAKKIATEVKTLKDDFVIMITPPFTALSKVSECIKGSNILLGAQNMSYMESGARTSEISPSMLLEFGVEYVILGHSECRLYLGETDEIINKKILTGLKHPFKYLILCVGETLNERDSEKTLDVVLNQVKKGLDGVSESDIKRIILAYEPIWAIGTGKTATKEEAEEVHKAIRLEIMKLYSKSVSDNVIIQYGGSVNSSNVKELMNEPDIDGALIGGASLKAESFLSIINNVL.

9–11 provides a ligand contact to substrate; it reads NWK. His-96 serves as the catalytic Electrophile. Glu-169 serves as the catalytic Proton acceptor. Substrate contacts are provided by residues Gly-175, Ser-215, and 236-237; that span reads GG.

The protein belongs to the triosephosphate isomerase family. As to quaternary structure, homodimer.

It is found in the cytoplasm. It catalyses the reaction D-glyceraldehyde 3-phosphate = dihydroxyacetone phosphate. The protein operates within carbohydrate biosynthesis; gluconeogenesis. Its pathway is carbohydrate degradation; glycolysis; D-glyceraldehyde 3-phosphate from glycerone phosphate: step 1/1. Involved in the gluconeogenesis. Catalyzes stereospecifically the conversion of dihydroxyacetone phosphate (DHAP) to D-glyceraldehyde-3-phosphate (G3P). This Borrelia garinii subsp. bavariensis (strain ATCC BAA-2496 / DSM 23469 / PBi) (Borreliella bavariensis) protein is Triosephosphate isomerase.